The chain runs to 354 residues: Sulfate/thiosulfate import ATP-binding protein CysA (354 aa).

The ABC transporter domain occupies 3–237 (IEVRGLSKRF…PATPFVYGFL (235 aa)). An ATP-binding site is contributed by 35–42 (GPSGCGKT).

This sequence belongs to the ABC transporter superfamily. Sulfate/tungstate importer (TC 3.A.1.6) family. The complex is composed of two ATP-binding proteins (CysA), two transmembrane proteins (CysT and CysW) and a solute-binding protein (CysP).

It localises to the cell inner membrane. It carries out the reaction sulfate(out) + ATP + H2O = sulfate(in) + ADP + phosphate + H(+). The catalysed reaction is thiosulfate(out) + ATP + H2O = thiosulfate(in) + ADP + phosphate + H(+). Its function is as follows. Part of the ABC transporter complex CysAWTP involved in sulfate/thiosulfate import. Responsible for energy coupling to the transport system. This Bordetella pertussis (strain Tohama I / ATCC BAA-589 / NCTC 13251) protein is Sulfate/thiosulfate import ATP-binding protein CysA.